Consider the following 273-residue polypeptide: MSLQNIIETAFENRADITPTTVAPEVKEAVLETIRQLDSGKLRVAERLGVGEWKVNEWAKKAVLLSFRIQDNEVLNDGVNKYFDKVPTKFADWSEDEFKNAGFRAVPGAVARRGSFVAKNAVLMPSYVNIGAYVDEGAMVDTWATVGSCAQIGKNVHLSGGVGIGGVLEPLQAAPTIIEDNCFIGARSEIVEGAIVEEGSVISMGVFIGQSTKIFDRTTGEIYQGRVPAGSVVVSGSLPSKDGSHSLYCAVIVKRVDAQTRAKTSVNELLRGI.

Residues Arg-104 and Asp-141 each coordinate substrate.

The protein belongs to the transferase hexapeptide repeat family. Homotrimer.

Its subcellular location is the cytoplasm. It catalyses the reaction (S)-2,3,4,5-tetrahydrodipicolinate + succinyl-CoA + H2O = (S)-2-succinylamino-6-oxoheptanedioate + CoA. The protein operates within amino-acid biosynthesis; L-lysine biosynthesis via DAP pathway; LL-2,6-diaminopimelate from (S)-tetrahydrodipicolinate (succinylase route): step 1/3. The chain is 2,3,4,5-tetrahydropyridine-2,6-dicarboxylate N-succinyltransferase from Neisseria gonorrhoeae (strain ATCC 700825 / FA 1090).